Consider the following 512-residue polypeptide: Probable ubiquitin carboxyl-terminal hydrolase 3 (512 aa).

The tract at residues 64–109 is disordered; that stretch reads TSKTKESEKSPKSWSAIAKKHVQGDSPVKKSHSVPVPSDRSEKKSF. The USP domain maps to 133–511; it reads RGFINTGNIC…VAYLLFYTRR (379 aa). Cys142 functions as the Nucleophile in the catalytic mechanism. His453 (proton acceptor) is an active-site residue.

This sequence belongs to the peptidase C19 family.

It carries out the reaction Thiol-dependent hydrolysis of ester, thioester, amide, peptide and isopeptide bonds formed by the C-terminal Gly of ubiquitin (a 76-residue protein attached to proteins as an intracellular targeting signal).. The sequence is that of Probable ubiquitin carboxyl-terminal hydrolase 3 (ubp3) from Schizosaccharomyces pombe (strain 972 / ATCC 24843) (Fission yeast).